Reading from the N-terminus, the 100-residue chain is MDLTPREKDKLLIFTAGLVAERRLARGVKLNYPEAMAYISAALLEGARDGQTVAELMHYGTTLLSRDQVMEGIAEMIPEIQVEATFPDGTKLVTVHQPIA.

The protein belongs to the urease gamma subunit family. As to quaternary structure, heterotrimer of UreA (gamma), UreB (beta) and UreC (alpha) subunits. Three heterotrimers associate to form the active enzyme.

It is found in the cytoplasm. The catalysed reaction is urea + 2 H2O + H(+) = hydrogencarbonate + 2 NH4(+). The protein operates within nitrogen metabolism; urea degradation; CO(2) and NH(3) from urea (urease route): step 1/1. The sequence is that of Urease subunit gamma from Pseudomonas syringae pv. syringae (strain B728a).